Reading from the N-terminus, the 288-residue chain is Transmembrane protein 163 (288 aa).

The span at 1–11 (MERAPGSERRS) shows a compositional bias: basic and acidic residues. The segment at 1–64 (MERAPGSERR…ESGQFSDGFE (64 aa)) is disordered. Residues 1-87 (MERAPGSERR…HEAQNYRKKA (87 aa)) lie on the Cytoplasmic side of the membrane. Ser-11 carries the post-translational modification Phosphoserine. Over residues 12 to 24 (PPGPGVPRPPPRG) the composition is skewed to pro residues. Residues 25–42 (HAPSTAAPAPNPAPLSSS) are compositionally biased toward low complexity. Residues 41–71 (SSMQPDEERQPRISESGQFSDGFEDRGLLES) form a required for interaction with MCOLN1 region. Ser-54, Ser-56, and Ser-60 each carry phosphoserine. The helical transmembrane segment at 88 to 108 (LWVSWLSIIVTLALAVAAFTV) threads the bilayer. The Extracellular portion of the chain corresponds to 109-115 (SVMRYSA). Residues 116 to 136 (SAFGFAFDAILDVLSSAIVLW) traverse the membrane as a helical segment. Residues 137-149 (RYSNAAAVHSAHR) are Cytoplasmic-facing. Residues 150–170 (EYIACVILGVIFLLSSICIVV) traverse the membrane as a helical segment. Topologically, residues 171-186 (KAIHDLSTRLLPEVDD) are extracellular. The chain crosses the membrane as a helical span at residues 187–207 (FLFSVSILSGILCSVLAVLKF). The Cytoplasmic segment spans residues 208-216 (MLGKVLTSR). A helical membrane pass occupies residues 217 to 237 (ALITDGFNSLVGGVMGFSILL). Residues 238 to 254 (SAEVFKHNAAVWYLDGS) lie on the Extracellular side of the membrane. The chain crosses the membrane as a helical span at residues 255–275 (IGVLIGLTIFAYGVKLLIDMV). Over 276–288 (PRVRQTRHYEMFE) the chain is Cytoplasmic.

Belongs to the TMEM163 family. As to quaternary structure, homodimer. Interacts with MCOLN1. Interacts with SLC30A1, SLC30A2, SLC30A3 and SLC30A4. As to expression, strongly expressed in brain. Also detected in lung, liver, kidney and spleen. Mainly expressed in the glutaminergic neuron subpopulations.

It localises to the cytoplasmic vesicle. The protein resides in the secretory vesicle. Its subcellular location is the synaptic vesicle membrane. The protein localises to the early endosome membrane. It is found in the late endosome membrane. It localises to the lysosome membrane. The protein resides in the cell membrane. It carries out the reaction Zn(2+)(in) = Zn(2+)(out). Zinc ion transporter that mediates zinc efflux and plays a crucial role in intracellular zinc homeostasis. Binds the divalent cations Zn(2+), Ni(2+), and to a minor extent Cu(2+). Is a functional modulator of P2X purinoceptors, including P2RX1, P2RX3, P2RX4 and P2RX7. Plays a role in central nervous system development and is required for myelination, and survival and proliferation of oligodendrocytes. This is Transmembrane protein 163 (Tmem163) from Rattus norvegicus (Rat).